Reading from the N-terminus, the 214-residue chain is Putative 3-methyladenine DNA glycosylase (214 aa).

This sequence belongs to the DNA glycosylase MPG family.

This Mycobacterium leprae (strain Br4923) protein is Putative 3-methyladenine DNA glycosylase.